A 207-amino-acid chain; its full sequence is Vascular endothelial growth factor B (207 aa).

An N-terminal signal peptide occupies residues 1 to 21; the sequence is MSPLLRRLLLVALLQLACTQA. Intrachain disulfides connect Cys-78-Cys-122 and Cys-82-Cys-124. A disordered region spans residues 140–182; it reads IPHHRPQPRSVLSWDSAPGASSPADIIHPTPAPGPSAHAAPSA.

Belongs to the PDGF/VEGF growth factor family. Homodimer; disulfide-linked. Can also form heterodimer with VEGF.

It localises to the secreted. Its function is as follows. Growth factor for endothelial cells. VEGF-B167 binds heparin and neuropilin-1 whereas the binding to neuropilin-1 of VEGF-B186 is regulated by proteolysis. The protein is Vascular endothelial growth factor B (Vegfb) of Rattus norvegicus (Rat).